The chain runs to 22 residues: Zinc finger protein 326 (22 aa).

The interval 1–22 is disordered; sequence QGYGFNEPEQTRNQGGSSWEAP. A compositionally biased stretch (polar residues) spans 11 to 22; it reads TRNQGGSSWEAP.

This sequence belongs to the AKAP95 family.

The protein localises to the nucleus matrix. Probable transcriptional activator which may play a role in neuronal differentiation. Able to bind DNA and activate expression in vitro. In Rattus norvegicus (Rat), this protein is Zinc finger protein 326 (Znf326).